The primary structure comprises 738 residues: Transcription activator of gluconeogenesis SMAC_06113 (738 aa).

Residues 1 to 65 (MPDDVGPAEA…KYDPKDPLRP (65 aa)) are disordered. Basic and acidic residues-rich tracts occupy residues 28–39 (ATTKDDDEKMAE) and 51–64 (GDQKKKYDPKDPLR). A DNA-binding region (zn(2)-C6 fungal-type) is located at residues 74–102 (CYACQRAHLTCGDERPCQRCIKRGLAEAC). Disordered stretches follow at residues 255–278 (SSGAAETPPRDPSISQQGTAGDVG), 328–404 (HAYA…KRQR), 530–579 (GTNS…KEQP), and 636–673 (SVPTTAGGSGSSNGTVVNGGPDSSPAGKTERERSTGAN). 2 stretches are compositionally biased toward polar residues: residues 337–351 (TSLQSPSTENNSPQP) and 530–540 (GTNSDTLSVSS). Positions 475–546 (ALFEHEEFMH…SVSSKGGRGG (72 aa)) constitute a PAS domain. 2 stretches are compositionally biased toward low complexity: residues 568 to 579 (QQQQSQQQKEQP) and 636 to 655 (SVPTTAGGSGSSNGTVVNGG).

This sequence belongs to the ERT1/acuK family.

It localises to the nucleus. Functionally, transcription factor which regulates nonfermentable carbon utilization. Activator of gluconeogenetic genes. The chain is Transcription activator of gluconeogenesis SMAC_06113 from Sordaria macrospora (strain ATCC MYA-333 / DSM 997 / K(L3346) / K-hell).